Reading from the N-terminus, the 372-residue chain is UDP-N-acetylglucosamine 2-epimerase (372 aa).

Substrate is bound by residues R10, K15, D95, E117, H212, Q270, F275, 289–291 (SGG), E295, and R312.

Belongs to the UDP-N-acetylglucosamine 2-epimerase family.

The enzyme catalyses UDP-N-acetyl-alpha-D-glucosamine = UDP-N-acetyl-alpha-D-mannosamine. Its pathway is capsule biogenesis; capsule polysaccharide biosynthesis. Activated by UDP-GlcNAc and inhibited by 2-acetamidoglucal and UDP. Activity is strongly decreased in the presence of Co(2+) and abolished in the presence of Mn(2+) or Zn(2+). Functionally, catalyzes the interconversion between UDP-N-acetylglucosamine (UDP-GlcNAc) and UDP-N-acetylmannosamine (UDP-ManNAc). Involved in the biosynthesis of the capsular polysaccharides. In vitro, can also use several chemoenzymatically synthesized UDP-ManNAc derivatives as substrates, with lower efficiency. The polypeptide is UDP-N-acetylglucosamine 2-epimerase (Neisseria meningitidis serogroup A / serotype 4A (strain DSM 15465 / Z2491)).